Consider the following 1239-residue polypeptide: Erythroid differentiation-related factor 1 (1239 aa).

Disordered regions lie at residues 1–39 (MGDP…QGSA), 219–269 (AQPV…REPL), 517–559 (PKKE…DPAD), and 620–646 (KKES…TRGG). 2 stretches are compositionally biased toward low complexity: residues 9 to 28 (AEAS…LSQA) and 253 to 263 (SSVSEDPSASS). A compositionally biased stretch (acidic residues) spans 530–547 (NSDESYSEEEEEMADSDE). TPR repeat units lie at residues 693 to 726 (SKAY…HDTY) and 914 to 953 (AQAH…LGTR).

The protein localises to the nucleus. Functionally, transcription factor involved in erythroid differentiation. Involved in transcriptional activation of the globin gene. The protein is Erythroid differentiation-related factor 1 (Edrf1) of Mus musculus (Mouse).